A 562-amino-acid polypeptide reads, in one-letter code: Sensor histidine kinase MtrB (562 aa).

2 consecutive transmembrane segments (helical) span residues 42–62 (VVALTFGLSLAVILALGFVLT) and 213–233 (GTMATGGMVLLVLLSGIALLV). The HAMP domain occupies 235–287 (RQVVVPVRSASRIAERFAEGHLSERMPVRGEDDMARLAVSFNDMAESLSRQIT). Residues 302–519 (DVSHELRTPL…CFRLTLPLVR (218 aa)) enclose the Histidine kinase domain. Positions 526-562 (SPLPMKPILQPSPQASTAGQQHGTQRQRLREHAERSR) are disordered. Positions 536–551 (PSPQASTAGQQHGTQR) are enriched in polar residues. The span at 553 to 562 (RLREHAERSR) shows a compositional bias: basic and acidic residues.

It localises to the cell membrane. It carries out the reaction ATP + protein L-histidine = ADP + protein N-phospho-L-histidine.. Its function is as follows. Member of the two-component regulatory system MtrA/MtrB. Seems to function as a membrane-associated protein kinase that phosphorylates MtrA in response to environmental signals. In Mycobacterium leprae (strain TN), this protein is Sensor histidine kinase MtrB (mtrB).